The primary structure comprises 550 residues: Glucose-6-phosphate isomerase (550 aa).

The active-site Proton donor is glutamate 356. Active-site residues include histidine 387 and lysine 515.

This sequence belongs to the GPI family.

The protein localises to the cytoplasm. The enzyme catalyses alpha-D-glucose 6-phosphate = beta-D-fructose 6-phosphate. It functions in the pathway carbohydrate biosynthesis; gluconeogenesis. The protein operates within carbohydrate degradation; glycolysis; D-glyceraldehyde 3-phosphate and glycerone phosphate from D-glucose: step 2/4. Functionally, catalyzes the reversible isomerization of glucose-6-phosphate to fructose-6-phosphate. The polypeptide is Glucose-6-phosphate isomerase (Photobacterium profundum (strain SS9)).